A 247-amino-acid polypeptide reads, in one-letter code: Enolase-phosphatase E1 (247 aa).

This sequence belongs to the HAD-like hydrolase superfamily. MasA/MtnC family. Monomer. Mg(2+) is required as a cofactor.

It catalyses the reaction 5-methylsulfanyl-2,3-dioxopentyl phosphate + H2O = 1,2-dihydroxy-5-(methylsulfanyl)pent-1-en-3-one + phosphate. It participates in amino-acid biosynthesis; L-methionine biosynthesis via salvage pathway; L-methionine from S-methyl-5-thio-alpha-D-ribose 1-phosphate: step 3/6. It functions in the pathway amino-acid biosynthesis; L-methionine biosynthesis via salvage pathway; L-methionine from S-methyl-5-thio-alpha-D-ribose 1-phosphate: step 4/6. Bifunctional enzyme that catalyzes the enolization of 2,3-diketo-5-methylthiopentyl-1-phosphate (DK-MTP-1-P) into the intermediate 2-hydroxy-3-keto-5-methylthiopentenyl-1-phosphate (HK-MTPenyl-1-P), which is then dephosphorylated to form the acireductone 1,2-dihydroxy-3-keto-5-methylthiopentene (DHK-MTPene). This is Enolase-phosphatase E1 from Leptospira biflexa serovar Patoc (strain Patoc 1 / Ames).